A 176-amino-acid chain; its full sequence is Peptide deformylase (176 aa).

Cys-92 and His-134 together coordinate Fe cation. Glu-135 is an active-site residue. Residue His-138 participates in Fe cation binding.

The protein belongs to the polypeptide deformylase family. Requires Fe(2+) as cofactor.

The enzyme catalyses N-terminal N-formyl-L-methionyl-[peptide] + H2O = N-terminal L-methionyl-[peptide] + formate. Its function is as follows. Removes the formyl group from the N-terminal Met of newly synthesized proteins. Requires at least a dipeptide for an efficient rate of reaction. N-terminal L-methionine is a prerequisite for activity but the enzyme has broad specificity at other positions. This is Peptide deformylase from Acinetobacter baumannii (strain SDF).